Reading from the N-terminus, the 704-residue chain is Neutral ceramidase (704 aa).

The signal sequence occupies residues 1-23 (MANSKMAFLAFLAVSFLCGLVSA). Residue Asn230 is glycosylated (N-linked (GlcNAc...) asparagine). Ser276 functions as the Nucleophile in the catalytic mechanism. N-linked (GlcNAc...) asparagine glycosylation is found at Asn362, Asn550, and Asn598.

It belongs to the neutral ceramidase family. Post-translationally, N-glycosylated. Widely expressed in different tissues but enriched in neurons at all stages of development.

The protein resides in the secreted. It catalyses the reaction an N-acylsphing-4-enine + H2O = sphing-4-enine + a fatty acid. In terms of biological role, hydrolyzes the sphingolipid ceramide into sphingosine and free fatty acid at an optimal pH of 6.5-7.5. Acts as a key regulator of sphingolipid signaling metabolites by generating sphingosine at the cell surface. Regulates synaptic vesicle exocytosis and trafficking by controlling presynaptic terminal sphingolipid composition. The polypeptide is Neutral ceramidase (CDase) (Drosophila melanogaster (Fruit fly)).